A 146-amino-acid chain; its full sequence is MARMHTRKRGRSGSKRIEVRERPSWIQYSDDEIKEMIVKMRKQGMTKSMIGIRLRDQYAIPGTRPVLHMKLGQVLKENNLESDVPEDLQALIERYKRAMKHLSLNKHDMNNKRKAQLIMSKMLRLIRYYKRTSRLPQDWSLERVLQ.

Belongs to the universal ribosomal protein uS15 family. Part of the 30S ribosomal subunit.

The polypeptide is Small ribosomal subunit protein uS15 (Picrophilus torridus (strain ATCC 700027 / DSM 9790 / JCM 10055 / NBRC 100828 / KAW 2/3)).